The primary structure comprises 310 residues: Probable metallo-hydrolase Mb2322c (310 aa).

Residues 1–29 form a disordered region; the sequence is MVATRGRPCPTNFSRPQRPRVAGNGTKSQ. Residues H137, D139, D141, H142, H221, D242, and H288 each coordinate Zn(2+).

This sequence belongs to the metallo-beta-lactamase superfamily. Zn(2+) serves as cofactor.

The polypeptide is Probable metallo-hydrolase Mb2322c (Mycobacterium bovis (strain ATCC BAA-935 / AF2122/97)).